Consider the following 564-residue polypeptide: Eukaryotic translation initiation factor 3 subunit L (564 aa).

Positions 331 to 537 (DAIRVFANIL…IHIADTKVAR (207 aa)) constitute a PCI domain.

The protein belongs to the eIF-3 subunit L family. In terms of assembly, component of the eukaryotic translation initiation factor 3 (eIF-3) complex, which is composed of 13 subunits: EIF3A, EIF3B, EIF3C, EIF3D, EIF3E, EIF3F, EIF3G, EIF3H, EIF3I, EIF3J, EIF3K, EIF3L and EIF3M.

The protein resides in the cytoplasm. Component of the eukaryotic translation initiation factor 3 (eIF-3) complex, which is involved in protein synthesis of a specialized repertoire of mRNAs and, together with other initiation factors, stimulates binding of mRNA and methionyl-tRNAi to the 40S ribosome. The eIF-3 complex specifically targets and initiates translation of a subset of mRNAs involved in cell proliferation. This Gallus gallus (Chicken) protein is Eukaryotic translation initiation factor 3 subunit L.